Consider the following 617-residue polypeptide: Chaperone protein HscA homolog (617 aa).

This sequence belongs to the heat shock protein 70 family.

Its function is as follows. Chaperone involved in the maturation of iron-sulfur cluster-containing proteins. Has a low intrinsic ATPase activity which is markedly stimulated by HscB. The chain is Chaperone protein HscA homolog from Aliivibrio salmonicida (strain LFI1238) (Vibrio salmonicida (strain LFI1238)).